The primary structure comprises 760 residues: MAHPRKAVATPATLQLGPPAQTAQSPAATLRHSRTASSSRRLSLIRCFISCHTFNLFLLLLLLASGVRAASKLATRSNKTSGSSTASGVGAGTAATSAAAAAASGTPIWDHAIDLNDDFRILWQIINQDITFEIQARTLGYVGFGFSPDGNLAGADMAIGWVDKGQTYFQDRHVTRNGDPEPVVDPSQDYMLMLGYENATHTVLRFRRKLDTCDPSHDIAITNDTMRLLYMYHAQDPPHGSVRPGTLPDPARAFRPYRPMVLMQRAQLPMPSPTHDERVRVLELRNEDVELPAGDLPLFWCKMFKLEDINRKHHLIRYEPIYDSSSSVHYLQHITLHECQGAHAELEEMAREQGRPCLGARSIPLACNAIVASWSRGSEGFTYPHEAGYPIESRQAKYYLMETHYNNLKPDFAQLHARQMADNSGLKIYFTHVLRPNDAGTLSIGMDPNWRHIIPPGQKRVVSEGQCIEDCTGYAFPQQGINIFAVMMRTHQIGKEVKLRQIRQTEELPPIAHDSNIDVAYQDFRRLPQSVHSMPGDRLIAECIYDSSSRKAITLGGLTMKEESCTVLTLYYPRQKKLTTCHSLPSLPTVLHSLGIEQLATDSNPVLISSPPELAGMTLEARLISYDWENQFGEFQEATRKGSFKPICWGAKNHVVPGSEFLEGYSINVTKTYKKHRRCKPKRPLAPPTERTAPPPASDLSELPVLHELDNNNIIEGAARSSRSSATDVHSLSRGSGRHFISCLLWLGASSWWLLLMLRT.

A disordered region spans residues 1–34 (MAHPRKAVATPATLQLGPPAQTAQSPAATLRHSR). A compositionally biased stretch (low complexity) spans 18–34 (PPAQTAQSPAATLRHSR). The helical transmembrane segment at 47–67 (CFISCHTFNLFLLLLLLASGV) threads the bilayer. N-linked (GlcNAc...) asparagine glycosylation is found at Asn-78, Asn-198, and Asn-223. The region spanning 117–233 (DDFRILWQII…DTMRLLYMYH (117 aa)) is the DOMON domain. Cystine bridges form between Cys-339–Cys-367, Cys-467–Cys-581, and Cys-543–Cys-565. A glycan (N-linked (GlcNAc...) asparagine) is linked at Asn-668. The interval 678 to 701 (RCKPKRPLAPPTERTAPPPASDLS) is disordered. A helical membrane pass occupies residues 740–760 (FISCLLWLGASSWWLLLMLRT).

Belongs to the copper type II ascorbate-dependent monooxygenase family.

It is found in the membrane. The chain is MOXD1 homolog 2 (olf413) from Drosophila melanogaster (Fruit fly).